A 761-amino-acid polypeptide reads, in one-letter code: Semaphorin-3D (761 aa).

An N-terminal signal peptide occupies residues Met1–Gly24. The Sema domain occupies Arg32 to Leu519. Cysteines 105 and 116 form a disulfide. N-linked (GlcNAc...) asparagine glycosylation is present at Asn127. Cystine bridges form between Cys134-Cys143, Cys274-Cys386, Cys298-Cys346, and Cys522-Cys540. In terms of domain architecture, Ig-like C2-type spans Pro552–Asn670. Residue Asn595 is glycosylated (N-linked (GlcNAc...) asparagine). Cys653 and Cys719 are oxidised to a cystine. A compositionally biased stretch (basic residues) spans Arg728–Glu754. The segment at Arg728 to Thr761 is disordered.

The protein belongs to the semaphorin family. Developing spinal cord and developing visual system. Collapsin-1, -2, -3, and -5 bind to overlapping but distinct axon tracts.

Its subcellular location is the secreted. In terms of biological role, induces the collapse and paralysis of neuronal growth cones. Could potentially act as repulsive cues toward specific neuronal populations. Binds to neuropilin. In Gallus gallus (Chicken), this protein is Semaphorin-3D (SEMA3D).